We begin with the raw amino-acid sequence, 276 residues long: D-aminoacyl-tRNA deacylase (276 aa).

Belongs to the DtdA deacylase family. As to quaternary structure, monomer. Zn(2+) is required as a cofactor.

The enzyme catalyses a D-aminoacyl-tRNA + H2O = a tRNA + a D-alpha-amino acid + H(+). It carries out the reaction glycyl-tRNA(Ala) + H2O = tRNA(Ala) + glycine + H(+). D-aminoacyl-tRNA deacylase with broad substrate specificity. By recycling D-aminoacyl-tRNA to D-amino acids and free tRNA molecules, this enzyme counteracts the toxicity associated with the formation of D-aminoacyl-tRNA entities in vivo. In Staphylothermus marinus (strain ATCC 43588 / DSM 3639 / JCM 9404 / F1), this protein is D-aminoacyl-tRNA deacylase.